The primary structure comprises 457 residues: 3-ketoacyl-CoA thiolase 5, peroxisomal (457 aa).

Residues 1-37 constitute a peroxisome transit peptide; that stretch reads MERAMERQKILLRHLNPVSSSNSSLKHEPSLLSPVNC. C137 (acyl-thioester intermediate) is an active-site residue. Residues H394 and C426 each act as proton acceptor in the active site.

The protein belongs to the thiolase-like superfamily. Thiolase family. As to quaternary structure, homodimer. In terms of tissue distribution, expressed in seedlings and wounded leaves.

It localises to the peroxisome. The enzyme catalyses an acyl-CoA + acetyl-CoA = a 3-oxoacyl-CoA + CoA. It functions in the pathway lipid metabolism; fatty acid metabolism. Functionally, probably involved in long chain fatty-acid beta-oxidation prior to gluconeogenesis during germination and subsequent seedling growth. Involved in systemic jasmonic acid (JA) biosynthesis after wounding and may be during senescence. The polypeptide is 3-ketoacyl-CoA thiolase 5, peroxisomal (KAT5) (Arabidopsis thaliana (Mouse-ear cress)).